The primary structure comprises 208 residues: Sodium/potassium-transporting ATPase subunit beta-1-interacting protein 2 (208 aa).

The next 4 helical transmembrane spans lie at 1-23 (MGYCSGRCTLIFICGMQLVCVLE), 35-55 (APILANFVHIIIVILGLFGTI), 64-84 (GYAVWLVLWVTWNVFVICFYL), and 148-168 (VAHSSLQIVLALAGFIYACYV).

The protein belongs to the NKAIN family. In terms of assembly, interacts with ATP1B1. Detected in the brain only and specifically in neurons; expressed in multiple regions such as cerebral cortex, thalamus, cerebellum, olfactory bulb and brainstem, but not in the hippocampus.

The protein localises to the cell membrane. In Mus musculus (Mouse), this protein is Sodium/potassium-transporting ATPase subunit beta-1-interacting protein 2 (Nkain2).